The primary structure comprises 258 residues: DNA-directed RNA polymerase subunit Rpo3 (258 aa).

The protein belongs to the archaeal Rpo3/eukaryotic RPB3 RNA polymerase subunit family. In terms of assembly, part of the RNA polymerase complex.

The protein localises to the cytoplasm. The catalysed reaction is RNA(n) + a ribonucleoside 5'-triphosphate = RNA(n+1) + diphosphate. In terms of biological role, DNA-dependent RNA polymerase (RNAP) catalyzes the transcription of DNA into RNA using the four ribonucleoside triphosphates as substrates. This chain is DNA-directed RNA polymerase subunit Rpo3, found in Pyrobaculum calidifontis (strain DSM 21063 / JCM 11548 / VA1).